The chain runs to 477 residues: Cysteine--tRNA ligase (477 aa).

C29 is a binding site for Zn(2+). Residues 31–41 carry the 'HIGH' region motif; that stretch reads PTVQASPHIGH. Zn(2+)-binding residues include C219, H244, and E248. The 'KMSKS' region signature appears at 275-279; the sequence is KMSKS. Residue K278 coordinates ATP.

Belongs to the class-I aminoacyl-tRNA synthetase family. Monomer. The cofactor is Zn(2+).

It is found in the cytoplasm. It carries out the reaction tRNA(Cys) + L-cysteine + ATP = L-cysteinyl-tRNA(Cys) + AMP + diphosphate. This chain is Cysteine--tRNA ligase, found in Leifsonia xyli subsp. xyli (strain CTCB07).